A 494-amino-acid polypeptide reads, in one-letter code: Integrin beta-like protein 1 (494 aa).

The first 23 residues, 1 to 23 (MRPPGFRNFLLLASSLLFAGLSA), serve as a signal peptide directing secretion. 40 disulfide bridges follow: Cys-40–Cys-71, Cys-51–Cys-69, Cys-63–Cys-74, Cys-76–Cys-89, Cys-91–Cys-112, Cys-96–Cys-110, Cys-104–Cys-115, Cys-117–Cys-126, Cys-132–Cys-159, Cys-143–Cys-157, Cys-151–Cys-162, Cys-164–Cys-178, Cys-180–Cys-202, Cys-185–Cys-200, Cys-194–Cys-205, Cys-207–Cys-216, Cys-220–Cys-247, Cys-231–Cys-245, Cys-239–Cys-250, Cys-252–Cys-269, Cys-271–Cys-296, Cys-276–Cys-294, Cys-288–Cys-299, Cys-301–Cys-310, Cys-316–Cys-343, Cys-327–Cys-341, Cys-335–Cys-346, Cys-348–Cys-361, Cys-363–Cys-384, Cys-368–Cys-382, Cys-376–Cys-387, Cys-389–Cys-398, Cys-404–Cys-431, Cys-415–Cys-429, Cys-423–Cys-434, Cys-436–Cys-448, Cys-450–Cys-471, Cys-455–Cys-469, Cys-463–Cys-474, and Cys-476–Cys-485. I-EGF domains are found at residues 40-90 (CRLS…PLCE), 91-127 (CHEW…DACQ), 132-179 (CDLT…KFCE), 180-217 (CDDR…DKCE), 220-270 (CDIT…DTCE), 271-311 (CDER…KKCE), 316-362 (CTLS…KTCE), 363-399 (CDDR…KLCQ), 404-449 (CNMT…EFCD), and 450-486 (CDDR…NACE). The stretch at 51–95 (CRAPGQPPGAALCHGRGRCDCGVCICHVTEPGMFFGPLCECHEWV) is one I repeat. Positions 51–494 (CRAPGQPPGA…CEIWLGSEYP (444 aa)) are cysteine-rich tandem repeats. An II repeat occupies 96 to 142 (CETYDGSTCAGHGKCDCGKCKCDQGWYGDACQYPTNCDLTKKKSNQM). The stretch at 143–184 (CKNSQDIICSNAGTCHCGRCKCDNSDGSGLVYGKFCECDDRE) is one III repeat. Residues 185–230 (CIDDETEEICGGHGKCYCGNCYCKAGWHGDKCEFQCDITPWESKRR) form an IV repeat. The V repeat unit spans residues 231-275 (CTSPDGKICSNRGTCVCGECTCHDVDPTGDWGDIHGDTCECDERD). One copy of the VI repeat lies at 276–326 (CRAVYDRYSDDFCSGHGQCNCGRCDCKAGWYGKKCEHPQSCTLSAEESIRK). Residues 327-367 (CQGSSDLPCSGRGKCECGKCTCYPPGDRRVYGKTCECDDRR) form a VII repeat. One copy of the VIII repeat lies at 368 to 414 (CEDLDGVVCGGHGTCSCGRCVCERGWFGKLCQHPRKCNMTEEQSKNL). N-linked (GlcNAc...) asparagine glycosylation is present at Asn-405. The IX repeat unit spans residues 415-454 (CESADGILCSGKGSCHCGKCICSAEEWYISGEFCDCDDRD). The stretch at 455–494 (CDKHDGLICTGNGICSCGNCECWDGWNGNACEIWLGSEYP) is one X repeat.

In terms of tissue distribution, widely expressed in many tissues, but readily detectable only in aorta.

The protein localises to the secreted. The protein is Integrin beta-like protein 1 (ITGBL1) of Homo sapiens (Human).